The following is a 448-amino-acid chain: ATP-dependent protease ATPase subunit HslU (448 aa).

Residues Val21, 63–68, Asp260, Glu326, and Arg398 each bind ATP; that span reads GVGKTE.

This sequence belongs to the ClpX chaperone family. HslU subfamily. A double ring-shaped homohexamer of HslV is capped on each side by a ring-shaped HslU homohexamer. The assembly of the HslU/HslV complex is dependent on binding of ATP.

It localises to the cytoplasm. Its function is as follows. ATPase subunit of a proteasome-like degradation complex; this subunit has chaperone activity. The binding of ATP and its subsequent hydrolysis by HslU are essential for unfolding of protein substrates subsequently hydrolyzed by HslV. HslU recognizes the N-terminal part of its protein substrates and unfolds these before they are guided to HslV for hydrolysis. In Sulfurihydrogenibium sp. (strain YO3AOP1), this protein is ATP-dependent protease ATPase subunit HslU.